A 240-amino-acid polypeptide reads, in one-letter code: Sugar fermentation stimulation protein homolog (240 aa).

Belongs to the SfsA family.

The chain is Sugar fermentation stimulation protein homolog from Pasteurella multocida (strain Pm70).